A 431-amino-acid polypeptide reads, in one-letter code: MSWLSSLYPIFIASTAFCALGLLLVAIILLSRKFLIKVHPCKLRINNDDSLTKTVDSGKTLLSSLLDSGIAIPSPCGGKAACKQCKIRITKNVDEPLETDRSTFSKQQLEQGWRLSCQTKVQHDMNLEIEERYFNASSWEGTVVSNENVATFIKELVLSVDPARPIPFKPGGYLQITVPSYKTNTSDWKQTMDPQYYSDWETFHLFDKVIDHQSLDANSANKAYSLASYPAELPLIKFNIRIATPPFINKSPDPTIPWGVCSSYIFSLKPGDKVTVSGPYGESFMKEDNRPVIFLIGGAGSSFGRSHILDLLLSKHTNRELTLWYGARSLKENIYQEEYEKLEKEFPNFHYHLVLSQPLQEDLDKGWDSKDPIKTNFLFKAFELGQLSKLPNPEDYLYYVCGPALHNSSILTLLDNYGVERSSIILDDFGS.

The helical transmembrane segment at 10–30 threads the bilayer; it reads IFIASTAFCALGLLLVAIILL. A 2Fe-2S ferredoxin-type domain is found at 41-133; sequence CKLRINNDDS…DMNLEIEERY (93 aa). [2Fe-2S] cluster is bound by residues C76, C82, C85, and C117. Positions 136 to 286 constitute an FAD-binding FR-type domain; it reads ASSWEGTVVS…SGPYGESFMK (151 aa). Residues 289–413 are catalytic; that stretch reads NRPVIFLIGG…ALHNSSILTL (125 aa).

This sequence belongs to the NqrF family. As to quaternary structure, composed of six subunits; NqrA, NqrB, NqrC, NqrD, NqrE and NqrF. [2Fe-2S] cluster serves as cofactor. It depends on FAD as a cofactor.

The protein localises to the cell inner membrane. The catalysed reaction is a ubiquinone + n Na(+)(in) + NADH + H(+) = a ubiquinol + n Na(+)(out) + NAD(+). NQR complex catalyzes the reduction of ubiquinone-1 to ubiquinol by two successive reactions, coupled with the transport of Na(+) ions from the cytoplasm to the periplasm. The first step is catalyzed by NqrF, which accepts electrons from NADH and reduces ubiquinone-1 to ubisemiquinone by a one-electron transfer pathway. In Chlamydia muridarum (strain MoPn / Nigg), this protein is Na(+)-translocating NADH-quinone reductase subunit F.